The chain runs to 228 residues: ATP phosphoribosyltransferase (228 aa).

This sequence belongs to the ATP phosphoribosyltransferase family. Short subfamily. Heteromultimer composed of HisG and HisZ subunits.

The protein localises to the cytoplasm. It carries out the reaction 1-(5-phospho-beta-D-ribosyl)-ATP + diphosphate = 5-phospho-alpha-D-ribose 1-diphosphate + ATP. The protein operates within amino-acid biosynthesis; L-histidine biosynthesis; L-histidine from 5-phospho-alpha-D-ribose 1-diphosphate: step 1/9. In terms of biological role, catalyzes the condensation of ATP and 5-phosphoribose 1-diphosphate to form N'-(5'-phosphoribosyl)-ATP (PR-ATP). Has a crucial role in the pathway because the rate of histidine biosynthesis seems to be controlled primarily by regulation of HisG enzymatic activity. The sequence is that of ATP phosphoribosyltransferase from Moorella thermoacetica (strain ATCC 39073 / JCM 9320).